The following is a 624-amino-acid chain: Acidic juvenile hormone-suppressible protein 1 (624 aa).

An N-terminal signal peptide occupies residues 1 to 18; the sequence is MARLVLCALALLVAGGLA. Residues asparagine 75 and asparagine 478 are each glycosylated (N-linked (GlcNAc...) asparagine).

This sequence belongs to the hemocyanin family.

The protein localises to the secreted. It localises to the extracellular space. The sequence is that of Acidic juvenile hormone-suppressible protein 1 (AJSP-1) from Trichoplusia ni (Cabbage looper).